The chain runs to 1375 residues: BNI1-related protein 1 (1375 aa).

The 397-residue stretch at 94–490 folds into the GBD/FH3 domain; it reads CMPQDASLVE…YLIDSFQVST (397 aa). Positions 520 to 601 form a coiled coil; sequence QSDEIARRAV…ITTHQRLYDQ (82 aa). Serine 621 carries the post-translational modification Phosphoserine. In terms of domain architecture, FH1 spans 659-851; sequence SSYLTDANNE…LVTPPAPPLP (193 aa). The interval 661–684 is disordered; the sequence is YLTDANNENESQNESEDKSKDSLF. Serine 751 is subject to Phosphoserine. Disordered stretches follow at residues 764 to 785, 817 to 839, and 1285 to 1309; these read KLPQ…QSLL, AVPP…GPSN, and KSLL…GEKV. Pro residues-rich tracts occupy residues 767-781 and 818-828; these read QLPP…PPLP and VPPPPPPPPLP. Positions 868–1290 constitute an FH2 domain; it reads DLKPPPTEKR…YEQRKSLLDM (423 aa). The 35-residue stretch at 1302–1336 folds into the DAD domain; the sequence is DENDGEKVNRDAVDLLISKLREVKKDPEPLRRRKS.

This sequence belongs to the formin homology family. BNI1 subfamily. As to quaternary structure, interacts with profilin at the FH1 domain.

In terms of biological role, may organize microtubules by mediating spindle positioning and movement in the budding process. Potential target of the RHO family members. The polypeptide is BNI1-related protein 1 (BNR1) (Saccharomyces cerevisiae (strain ATCC 204508 / S288c) (Baker's yeast)).